A 141-amino-acid chain; its full sequence is Hemoglobin subunit beta (141 aa).

The region spanning H2 to H141 is the Globin domain. 2 residues coordinate heme b: H58 and H87.

Belongs to the globin family. Heterotetramer of two alpha chains and two beta chains. As to expression, red blood cells.

Functionally, involved in oxygen transport from the lung to the various peripheral tissues. This is Hemoglobin subunit beta (HBB) from Heterodontus portusjacksoni (Port Jackson shark).